The chain runs to 397 residues: Alanine racemase, biosynthetic (397 aa).

Lys-42 (proton acceptor; specific for D-alanine) is an active-site residue. Residue Lys-42 is modified to N6-(pyridoxal phosphate)lysine. Residue Arg-136 coordinates substrate. Catalysis depends on Tyr-257, which acts as the Proton acceptor; specific for L-alanine. Met-305 serves as a coordination point for substrate. Residues 373-397 form a disordered region; it reads ANRPTEAMSNPSRAKSRPMDKQALI.

This sequence belongs to the alanine racemase family. Pyridoxal 5'-phosphate is required as a cofactor.

It carries out the reaction L-alanine = D-alanine. The protein operates within amino-acid biosynthesis; D-alanine biosynthesis; D-alanine from L-alanine: step 1/1. It functions in the pathway cell wall biogenesis; peptidoglycan biosynthesis. Its function is as follows. Catalyzes the interconversion of L-alanine and D-alanine. Provides the D-alanine required for cell wall biosynthesis. In Mesorhizobium japonicum (strain LMG 29417 / CECT 9101 / MAFF 303099) (Mesorhizobium loti (strain MAFF 303099)), this protein is Alanine racemase, biosynthetic (alr).